We begin with the raw amino-acid sequence, 388 residues long: Subtilisin-like serine protease AsES (388 aa).

The signal sequence occupies residues 1–15 (MRLSLVLALLPVAFG). A propeptide spans 16–105 (APTRRDEPAP…IEQDAIVTLA (90 aa)) (removed in mature form). The Peptidase S8 domain maps to 114–388 (PWGLARISTR…RLAFNGNPSG (275 aa)). Cys-141 and Cys-230 are oxidised to a cystine. Catalysis depends on charge relay system residues Asp-146 and His-176. Residues Asn-232 and Asn-237 are each glycosylated (N-linked (GlcNAc...) asparagine). A disulfide bond links Cys-285 and Cys-357. Catalysis depends on Ser-331, which acts as the Charge relay system.

The protein belongs to the peptidase S8 family.

Its subcellular location is the secreted. With respect to regulation, the elicitor proteolytic activity is completely inhibited by PMSF. The activity is also significantly reduced by aprotinin (leading to 37% residual activity), by leupeptin (leading to 54% residual activity), by the ovomucoid trypsin inhibitor (leading to 65% residual activity), and by p-aminobenzamidine (leading to 26% residual activity). Extracellular elicitor protein that induces a strong defense response in strawberry and confers both local and systemic plant resistance against the fungal pathogen Colletotricum acutatum, the casual agent of anthracnose disease. AsES activates a cascade of defense responses, including calcium influx, oxidative burst, hypersensitive cell-death response (HR), accumulation of autofluorescent compounds, cell-wall reinforcement with callose and lignin deposition, salicylic acid accumulation, and expression of defense-related genes, such as PR1, PG1, MYB30, RBOH-D, RBOH-F, CHI23, and FLS. The oxidative burst consists in a progressive extracellular accumulation of H(2)O(2) that starts immediately after the contact with AsES and is preceded by a rapid and transient cell membrane depolarization. During this phase takes place also a rapid intracellular accumulation of NO at the chloroplasts. After the first extracellular H(2)O(2) production phase, two intracellular H(2)O(2) accumulation events occur, the first 2 hours after induction, and the second 7 hours after induction. AsES also produces a transient increase of ion leakage, and a progressive alkalinization of the extracellular medium. Confers also local and systemic plant resistance against Botrytis cinerea in Arabidopsis thaliana. Systemic, but not local resistance is dependent on the length of exposure to AsES. The protection to B.cinerea is due to the induction of the plant defenses via the salicylic acid, jasmonic acid and ethylene signaling pathways. Exhibits subtilisin-like proteolytic activity which is necessary but not sufficient for its elicitor function in strawberry plants. Probably induces defense by means of proteolysis of one or multiple host proteins that are specific targets of this protease. The polypeptide is Subtilisin-like serine protease AsES (Sarocladium strictum (Black bundle disease fungus)).